The following is a 383-amino-acid chain: Arginine biosynthesis bifunctional protein ArgJ 1 (383 aa).

The segment at Met-1 to Asp-25 is disordered. Residues Thr-146, Lys-168, Thr-179, Glu-259, Asn-378, and Ser-383 each coordinate substrate. The active-site Nucleophile is the Thr-179.

Belongs to the ArgJ family. As to quaternary structure, heterotetramer of two alpha and two beta chains.

It is found in the cytoplasm. The catalysed reaction is N(2)-acetyl-L-ornithine + L-glutamate = N-acetyl-L-glutamate + L-ornithine. The enzyme catalyses L-glutamate + acetyl-CoA = N-acetyl-L-glutamate + CoA + H(+). The protein operates within amino-acid biosynthesis; L-arginine biosynthesis; L-ornithine and N-acetyl-L-glutamate from L-glutamate and N(2)-acetyl-L-ornithine (cyclic): step 1/1. It participates in amino-acid biosynthesis; L-arginine biosynthesis; N(2)-acetyl-L-ornithine from L-glutamate: step 1/4. In terms of biological role, catalyzes two activities which are involved in the cyclic version of arginine biosynthesis: the synthesis of N-acetylglutamate from glutamate and acetyl-CoA as the acetyl donor, and of ornithine by transacetylation between N(2)-acetylornithine and glutamate. The chain is Arginine biosynthesis bifunctional protein ArgJ 1 from Streptomyces clavuligerus.